A 755-amino-acid chain; its full sequence is 1,4-alpha-glucan branching enzyme GlgB (755 aa).

Residue Asp-435 is the Nucleophile of the active site. Residue Glu-488 is the Proton donor of the active site.

Belongs to the glycosyl hydrolase 13 family. GlgB subfamily. Monomer.

The catalysed reaction is Transfers a segment of a (1-&gt;4)-alpha-D-glucan chain to a primary hydroxy group in a similar glucan chain.. The protein operates within glycan biosynthesis; glycogen biosynthesis. Its function is as follows. Catalyzes the formation of the alpha-1,6-glucosidic linkages in glycogen by scission of a 1,4-alpha-linked oligosaccharide from growing alpha-1,4-glucan chains and the subsequent attachment of the oligosaccharide to the alpha-1,6 position. The polypeptide is 1,4-alpha-glucan branching enzyme GlgB (Vibrio parahaemolyticus serotype O3:K6 (strain RIMD 2210633)).